A 347-amino-acid chain; its full sequence is Protease HtpX homolog (347 aa).

A run of 4 helical transmembrane segments spans residues 8 to 28 (VALG…ATIA), 44 to 64 (AMAL…YLFV), 76 to 96 (LSFL…TYFA), and 141 to 163 (AFAY…LALT). H174 provides a ligand contact to Zn(2+). The active site involves E175. Zn(2+) is bound at residue H178. A run of 2 helical transmembrane segments spans residues 185–205 (AIML…VTAV) and 221–241 (ILAA…LLVL). E248 is a binding site for Zn(2+).

The protein belongs to the peptidase M48B family. The cofactor is Zn(2+).

The protein localises to the cell membrane. The sequence is that of Protease HtpX homolog from Pyrobaculum aerophilum (strain ATCC 51768 / DSM 7523 / JCM 9630 / CIP 104966 / NBRC 100827 / IM2).